We begin with the raw amino-acid sequence, 747 residues long: uncharacterized protein (747 aa).

A helical transmembrane segment spans residues 7-27 (FFLKVISVIAPIVIIPTILAN).

It localises to the membrane. This is an uncharacterized protein from Ureaplasma parvum serovar 3 (strain ATCC 700970).